We begin with the raw amino-acid sequence, 517 residues long: Aspartyl/glutamyl-tRNA(Asn/Gln) amidotransferase subunit B (517 aa).

Belongs to the GatB/GatE family. GatB subfamily. Heterotrimer of A, B and C subunits.

The enzyme catalyses L-glutamyl-tRNA(Gln) + L-glutamine + ATP + H2O = L-glutaminyl-tRNA(Gln) + L-glutamate + ADP + phosphate + H(+). The catalysed reaction is L-aspartyl-tRNA(Asn) + L-glutamine + ATP + H2O = L-asparaginyl-tRNA(Asn) + L-glutamate + ADP + phosphate + 2 H(+). In terms of biological role, allows the formation of correctly charged Asn-tRNA(Asn) or Gln-tRNA(Gln) through the transamidation of misacylated Asp-tRNA(Asn) or Glu-tRNA(Gln) in organisms which lack either or both of asparaginyl-tRNA or glutaminyl-tRNA synthetases. The reaction takes place in the presence of glutamine and ATP through an activated phospho-Asp-tRNA(Asn) or phospho-Glu-tRNA(Gln). The sequence is that of Aspartyl/glutamyl-tRNA(Asn/Gln) amidotransferase subunit B from Thermobifida fusca (strain YX).